The primary structure comprises 292 residues: Ribosomal protein L11 methyltransferase (292 aa).

S-adenosyl-L-methionine is bound by residues threonine 136, glycine 159, aspartate 181, and asparagine 228.

It belongs to the methyltransferase superfamily. PrmA family.

Its subcellular location is the cytoplasm. It catalyses the reaction L-lysyl-[protein] + 3 S-adenosyl-L-methionine = N(6),N(6),N(6)-trimethyl-L-lysyl-[protein] + 3 S-adenosyl-L-homocysteine + 3 H(+). Methylates ribosomal protein L11. The protein is Ribosomal protein L11 methyltransferase of Rhizobium johnstonii (strain DSM 114642 / LMG 32736 / 3841) (Rhizobium leguminosarum bv. viciae).